The chain runs to 121 residues: Basic phospholipase A2 homolog GodMT-II (121 aa).

7 disulfide bridges follow: Cys26–Cys115, Cys28–Cys44, Cys43–Cys95, Cys49–Cys121, Cys50–Cys88, Cys57–Cys81, and Cys75–Cys86. The interval 105–117 is important for membrane-damaging activities in eukaryotes and bacteria; heparin-binding; sequence KNYKIYPKPLCKK.

Belongs to the phospholipase A2 family. Group II subfamily. K49 sub-subfamily. As to quaternary structure, monomer. As to expression, expressed by the venom gland.

It is found in the secreted. Snake venom phospholipase A2 homolog that lacks enzymatic activity but shows high myotoxic activities. In vivo, induces a mild edema when subcutaneously injected into mice foot pad. The polypeptide is Basic phospholipase A2 homolog GodMT-II (Cerrophidion godmani (Porthidium godmani)).